The chain runs to 100 residues: Putative antiporter subunit mnhF2 (100 aa).

3 consecutive transmembrane segments (helical) span residues 6–26 (TNFF…IGLF), 38–58 (VVAF…VSVI), and 62–82 (VSFL…SVSI).

This sequence belongs to the CPA3 antiporters (TC 2.A.63) subunit F family. In terms of assembly, may form a heterooligomeric complex that consists of seven subunits: mnhA2, mnhB2, mnhC2, mnhD2, mnhE2, mnhF2 and mnhG2.

Its subcellular location is the cell membrane. This Staphylococcus haemolyticus (strain JCSC1435) protein is Putative antiporter subunit mnhF2 (mnhF2).